The following is a 445-amino-acid chain: Secretin receptor (445 aa).

An N-terminal signal peptide occupies residues 1–21 (MCPRPGPPLGLWLLLGFACAA). The Extracellular segment spans residues 22–137 (HLVGAPPRLC…HERQHAYLLK (116 aa)). 3 disulfide bridges follow: Cys-44/Cys-71, Cys-62/Cys-103, and Cys-85/Cys-119. N-linked (GlcNAc...) asparagine glycans are attached at residues Asn-68, Asn-96, Asn-102, and Asn-124. A helical transmembrane segment spans residues 138-163 (LKVMYTVGYSSSLVMLLVALGILCAF). Topologically, residues 164–170 (RRLHCTR) are cytoplasmic. A helical membrane pass occupies residues 171–191 (NYIHMHLFLSFILRALSNFIK). The Extracellular segment spans residues 192–212 (DAVLFSSDDAIHCDAHRVGCK). A disulfide bond links Cys-211 and Cys-281. A helical transmembrane segment spans residues 213–235 (LVMVFFQYCIMANYAWLLVEGLY). Residues 236-250 (LHSLLVVSFFSERKC) lie on the Cytoplasmic side of the membrane. A helical membrane pass occupies residues 251-272 (LQGFVVLGWGSPAMFVTSWAVT). The Extracellular portion of the chain corresponds to 273–287 (RHFLEDSGCWDINAN). Residues 288-311 (AAIWWVIRGPVILSILINFILFIN) form a helical membrane-spanning segment. The Cytoplasmic portion of the chain corresponds to 312–336 (ILRILTRKLRTQETRGQDMNHYKRL). A helical membrane pass occupies residues 337–352 (ARSTLLLIPLFGVHYI). Residues 353-363 (VFVFSPEGAME) lie on the Extracellular side of the membrane. Residues 364-387 (IQLFFELALGSFQGLVVAVLYCFL) form a helical membrane-spanning segment. The Cytoplasmic portion of the chain corresponds to 388 to 445 (NGEVQLEVQKKWQQWHLWEPPLCPVALSSSFSNGTSSLNSTKACPSGRSRDTCKVSII).

This sequence belongs to the G-protein coupled receptor 2 family. Post-translationally, phosphorylated on Ser and Thr residues at the cytoplasmic C-terminus by G protein-coupled receptor kinases (GRKs).

It localises to the cell membrane. The protein localises to the basolateral cell membrane. Functionally, g protein-coupled receptor activated by secretin (SCT), which is involved in different processes such as regulation of the pH of the duodenal content, food intake and water homeostasis. Ligand binding causes a conformation change that triggers signaling via guanine nucleotide-binding proteins (G proteins) and activates cAMP-dependent pathway. Upon binding to secretin, regulates the pH of the duodenum by (1) inhibiting the secretion of gastric acid from the parietal cells of the stomach and (2) stimulating the production of bicarbonate (NaHCO(3)) from the ductal cells of the pancreas. In addition to regulating the pH of the duodenal content, plays a central role in diet induced thermogenesis: acts as a non-sympathetic brown fat (BAT) activator mediating prandial thermogenesis, which consequentially induces satiation. Mechanistically, secretin released by the gut after a meal binds to secretin receptor (SCTR) in brown adipocytes, activating brown fat thermogenesis by stimulating lipolysis, which is sensed in the brain and promotes satiation. Also able to stimulate lipolysis in white adipocytes. Also plays an important role in cellular osmoregulation by regulating renal water reabsorption. Also plays a role in the central nervous system: required for synaptic plasticity. In Oryctolagus cuniculus (Rabbit), this protein is Secretin receptor (SCTR).